A 1026-amino-acid chain; its full sequence is Multidrug resistance protein MdtC (1026 aa).

11 helical membrane passes run 15–35 (ILIAAAITLCGILGFRLLPVA), 333–353 (EVEETLAISVALVILVVFLFL), 360–380 (LIPAVAVPVSLIGTFAAMYLC), 387–407 (LSLMALTIATGFVVDDAIVVL), 431–451 (VGFTVISMSLSLVAVFLPLLL), 463–483 (FAVTLSVAIGISLVVSLTLTP), 528–548 (LVGVVFLGTVALNIWLYIAIP), 853–873 (LILIVAAIATVYIVLEILYES), 897–917 (LFNAPFSLIALIGIMLLIGIV), 953–973 (PIMMTTLAALFGALPLVLSGG), and 984–1004 (ITIVGGLVMSQLLTLYTTPVV).

It belongs to the resistance-nodulation-cell division (RND) (TC 2.A.6) family. MdtC subfamily. Part of a tripartite efflux system composed of MdtA, MdtB and MdtC. MdtC forms a heteromultimer with MdtB.

The protein localises to the cell inner membrane. This Salmonella paratyphi A (strain ATCC 9150 / SARB42) protein is Multidrug resistance protein MdtC.